Here is a 512-residue protein sequence, read N- to C-terminus: Cobyric acid synthase (512 aa).

A GATase cobBQ-type domain is found at 254–455 (EIDIAVVKLP…LHGLFDNKAL (202 aa)). C335 acts as the Nucleophile in catalysis. H447 is a catalytic residue.

The protein belongs to the CobB/CobQ family. CobQ subfamily.

The protein operates within cofactor biosynthesis; adenosylcobalamin biosynthesis. Its function is as follows. Catalyzes amidations at positions B, D, E, and G on adenosylcobyrinic A,C-diamide. NH(2) groups are provided by glutamine, and one molecule of ATP is hydrogenolyzed for each amidation. The protein is Cobyric acid synthase of Desulforamulus reducens (strain ATCC BAA-1160 / DSM 100696 / MI-1) (Desulfotomaculum reducens).